The sequence spans 774 residues: Protein translocase subunit SecA 2 (774 aa).

Residues Gln94, Gly112–Thr116, and Asp501 each bind ATP.

Belongs to the SecA family. Monomer and homodimer. Part of the essential Sec protein translocation apparatus which comprises SecA, SecYEG and auxiliary proteins SecDF. Other proteins may also be involved.

The protein resides in the cell membrane. Its subcellular location is the cytoplasm. The catalysed reaction is ATP + H2O + cellular proteinSide 1 = ADP + phosphate + cellular proteinSide 2.. Part of the Sec protein translocase complex. Interacts with the SecYEG preprotein conducting channel. Has a central role in coupling the hydrolysis of ATP to the transfer of proteins into and across the cell membrane, serving as an ATP-driven molecular motor driving the stepwise translocation of polypeptide chains across the membrane. The sequence is that of Protein translocase subunit SecA 2 from Mycobacterium sp. (strain JLS).